Consider the following 891-residue polypeptide: Alanine--tRNA ligase (891 aa).

Positions 569, 573, 671, and 675 each coordinate Zn(2+).

Belongs to the class-II aminoacyl-tRNA synthetase family. In terms of assembly, homotetramer. Requires Zn(2+) as cofactor.

The protein localises to the cytoplasm. It catalyses the reaction tRNA(Ala) + L-alanine + ATP = L-alanyl-tRNA(Ala) + AMP + diphosphate. Its function is as follows. Catalyzes the attachment of alanine to tRNA(Ala) in a two-step reaction: alanine is first activated by ATP to form Ala-AMP and then transferred to the acceptor end of tRNA(Ala). Also edits incorrectly charged Ser-tRNA(Ala) and Gly-tRNA(Ala) via its editing domain. In Blochmanniella floridana, this protein is Alanine--tRNA ligase.